A 134-amino-acid chain; its full sequence is Small ribosomal subunit protein uS8 (134 aa).

This sequence belongs to the universal ribosomal protein uS8 family. As to quaternary structure, part of the 30S ribosomal subunit. Contacts proteins S5 and S12.

In terms of biological role, one of the primary rRNA binding proteins, it binds directly to 16S rRNA central domain where it helps coordinate assembly of the platform of the 30S subunit. This Pseudothermotoga lettingae (strain ATCC BAA-301 / DSM 14385 / NBRC 107922 / TMO) (Thermotoga lettingae) protein is Small ribosomal subunit protein uS8.